Consider the following 594-residue polypeptide: (-)-endo-fenchol synthase, chloroplastic (594 aa).

The transit peptide at 1–50 (MSSLVMHVGIVNKPAITYLPTLSRRASNLHNVSSTRLQTSCSLQLDYKPV) directs the protein to the chloroplast. 4 residues coordinate Mg(2+): D348, D352, D492, and E500. A DDXXD motif motif is present at residues 348-352 (DDIYD).

It belongs to the terpene synthase family. Tpsa subfamily. The cofactor is Mg(2+). Mn(2+) is required as a cofactor. Expressed at low levels in leaves.

The protein localises to the plastid. The protein resides in the chloroplast. The enzyme catalyses (2E)-geranyl diphosphate = alpha-pinene + diphosphate. The catalysed reaction is (2E)-geranyl diphosphate + H2O = (1S,2S,4R)-endo-fenchol + diphosphate. It carries out the reaction (2E)-geranyl diphosphate = limonene + diphosphate. It functions in the pathway secondary metabolite biosynthesis; terpenoid biosynthesis. Functionally, monoterpene synthase involved in the biosynthesis of volatile compounds widely used in aromatherapy and folk medicine, and present in culinary herbs. Mediates the conversion of (2E)-geranyl diphosphate (GPP) into alpha fenchol, limonene and alpha-pinene and, as minor compounds, into beta-myrcene, alpha-terpinolene and alpha-phellandrene. The protein is (-)-endo-fenchol synthase, chloroplastic of Lavandula stoechas (Butterfly lavender).